A 163-amino-acid polypeptide reads, in one-letter code: Phosphopantetheine adenylyltransferase (163 aa).

Residue Ser10 coordinates substrate. ATP contacts are provided by residues 10 to 11 and His18; that span reads SF. Substrate-binding residues include Lys42, Leu74, and Arg88. Residues 89 to 91, Glu99, and 124 to 130 contribute to the ATP site; these read GLR and YSFLSSS.

Belongs to the bacterial CoaD family. As to quaternary structure, homohexamer. The cofactor is Mg(2+).

It localises to the cytoplasm. The catalysed reaction is (R)-4'-phosphopantetheine + ATP + H(+) = 3'-dephospho-CoA + diphosphate. It functions in the pathway cofactor biosynthesis; coenzyme A biosynthesis; CoA from (R)-pantothenate: step 4/5. In terms of biological role, reversibly transfers an adenylyl group from ATP to 4'-phosphopantetheine, yielding dephospho-CoA (dPCoA) and pyrophosphate. This is Phosphopantetheine adenylyltransferase from Bacillus cereus (strain G9842).